The chain runs to 372 residues: Aminomethyltransferase (372 aa).

This sequence belongs to the GcvT family. As to quaternary structure, the glycine cleavage system is composed of four proteins: P, T, L and H.

It carries out the reaction N(6)-[(R)-S(8)-aminomethyldihydrolipoyl]-L-lysyl-[protein] + (6S)-5,6,7,8-tetrahydrofolate = N(6)-[(R)-dihydrolipoyl]-L-lysyl-[protein] + (6R)-5,10-methylene-5,6,7,8-tetrahydrofolate + NH4(+). Functionally, the glycine cleavage system catalyzes the degradation of glycine. In Streptomyces avermitilis (strain ATCC 31267 / DSM 46492 / JCM 5070 / NBRC 14893 / NCIMB 12804 / NRRL 8165 / MA-4680), this protein is Aminomethyltransferase.